The chain runs to 398 residues: Acetate kinase (398 aa).

Residue Asn-10 participates in Mg(2+) binding. Position 17 (Lys-17) interacts with ATP. Arg-89 contributes to the substrate binding site. The Proton donor/acceptor role is filled by Asp-148. ATP-binding positions include 208 to 212 (HLGNG), 283 to 285 (DCR), and 331 to 335 (GIGEN). Glu-385 serves as a coordination point for Mg(2+).

The protein belongs to the acetokinase family. As to quaternary structure, homodimer. The cofactor is Mg(2+). It depends on Mn(2+) as a cofactor.

The protein localises to the cytoplasm. The enzyme catalyses acetate + ATP = acetyl phosphate + ADP. It functions in the pathway metabolic intermediate biosynthesis; acetyl-CoA biosynthesis; acetyl-CoA from acetate: step 1/2. In terms of biological role, catalyzes the formation of acetyl phosphate from acetate and ATP. Can also catalyze the reverse reaction. The polypeptide is Acetate kinase (Histophilus somni (strain 2336) (Haemophilus somnus)).